The sequence spans 422 residues: Probable metallocarboxypeptidase A (422 aa).

A signal peptide spans 1 to 17 (MRSVLSLALLAVNVVTA). Positions 18-112 (AVVAPFDYSG…FEAYSAGYAP (95 aa)) are cleaved as a propeptide — activation peptide. Positions 119-419 (SYHSYQDHLS…AGTVAMLKAV (301 aa)) constitute a Peptidase M14 domain. Residues His-179 and Glu-182 each contribute to the Zn(2+) site. Residues 179–182 (HARE), Arg-237, and 254–255 (NR) contribute to the substrate site. Cysteines 248 and 271 form a disulfide. His-309 serves as a coordination point for Zn(2+). 310 to 311 (SY) contacts substrate. Glu-385 functions as the Proton donor/acceptor in the catalytic mechanism.

Belongs to the peptidase M14 family. Zn(2+) is required as a cofactor.

It localises to the secreted. Functionally, extracellular metalloprotease that contributes to pathogenicity. This chain is Probable metallocarboxypeptidase A (MCPA), found in Trichophyton verrucosum (strain HKI 0517).